Consider the following 189-residue polypeptide: Der GTPase-activating protein YihI (189 aa).

The disordered stretch occupies residues 1–81; sequence MARKKKTRRV…ALAKKDPRLG (81 aa). Basic and acidic residues-rich tracts occupy residues 9-27 and 35-46; these read RVSDIMPARKVDKKVELPK and TRYELDAKARED. Residues 60–71 are compositionally biased toward polar residues; the sequence is RHSATENNNNHQ.

Belongs to the YihI family. In terms of assembly, interacts with Der.

Its function is as follows. A GTPase-activating protein (GAP) that modifies Der/EngA GTPase function. May play a role in ribosome biogenesis. The chain is Der GTPase-activating protein YihI from Pasteurella multocida (strain Pm70).